The chain runs to 445 residues: Argininosuccinate synthase (445 aa).

Residues 17–25 and Ala-43 contribute to the ATP site; that span reads AFSGGLDTS. Tyr-99 contacts L-citrulline. The ATP site is built by Gly-129 and Thr-131. L-aspartate is bound by residues Thr-131, Asn-135, and Asp-136. Position 135 (Asn-135) interacts with L-citrulline. Asp-136 serves as a coordination point for ATP. 2 residues coordinate L-citrulline: Arg-139 and Ser-192. ATP is bound at residue Asp-194. 3 residues coordinate L-citrulline: Thr-201, Glu-203, and Glu-280.

It belongs to the argininosuccinate synthase family. Type 2 subfamily. In terms of assembly, homotetramer.

It is found in the cytoplasm. It catalyses the reaction L-citrulline + L-aspartate + ATP = 2-(N(omega)-L-arginino)succinate + AMP + diphosphate + H(+). The protein operates within amino-acid biosynthesis; L-arginine biosynthesis; L-arginine from L-ornithine and carbamoyl phosphate: step 2/3. This chain is Argininosuccinate synthase, found in Rhodopseudomonas palustris (strain BisB18).